We begin with the raw amino-acid sequence, 1127 residues long: Inactive phospholipase C-like protein 2 (1127 aa).

Residues 1 to 11 show a composition bias toward gly residues; that stretch reads MAECGRGGAAG. Positions 1–128 are disordered; it reads MAECGRGGAA…KKTVSFSSMP (128 aa). Ala-2 carries the N-acetylalanine modification. The residue at position 17 (Ser-17) is a Phosphoserine. The segment covering 19–31 has biased composition (low complexity); the sequence is GPALGAKGALKAG. Positions 32 to 42 are enriched in gly residues; sequence VGEGGGGGGRL. Position 84 is a phosphothreonine (Thr-84). The PH domain maps to 141–251; that stretch reads NSMVEGSELK…WVTGLRYLIS (111 aa). One can recognise a PI-PLC X-box domain in the interval 426–570; it reads QDMKQPLSHY…LKGKILIKAK (145 aa). Thr-584 carries the post-translational modification Phosphothreonine. A PI-PLC Y-box domain is found at 618–734; the sequence is LSELVSICKS…GYVLRPAIMR (117 aa). Residues 734-863 enclose the C2 domain; sequence REEVSFFSAN…TGYRHVPLQS (130 aa). Positions 1101–1127 are disordered; sequence GTENADVQKPRRSLEVIPEKANDETGE. Positions 1106-1127 are enriched in basic and acidic residues; it reads DVQKPRRSLEVIPEKANDETGE. Phosphoserine is present on Ser-1113.

Its subcellular location is the cytoplasm. Functionally, may play an role in the regulation of Ins(1,4,5)P3 around the endoplasmic reticulum. This Homo sapiens (Human) protein is Inactive phospholipase C-like protein 2 (PLCL2).